The following is a 146-amino-acid chain: Leghemoglobin Lb120-1 (146 aa).

A Globin domain is found at 2–146; it reads GFTEKQEALV…LASAIKKAMN (145 aa). Nitrated tyrosine is present on residues Y24 and Y29. S44 lines the heme b pocket. S44 is modified (phosphoserine). O2 is bound at residue H61. Positions 64, 93, and 96 each coordinate heme b. Y134 carries the nitrated tyrosine modification.

This sequence belongs to the plant globin family. In terms of assembly, monomer. In terms of processing, nitrated in effective nodules and particularly in hypoxic conditions; this mechanism may play a protective role in the symbiosis by buffering toxic peroxynitrite NO(2)(-). Nitration level decrease during nodule senescence. Phosphorylation at Ser-44 disrupts the molecular environment of its porphyrin ring oxygen binding pocket, thus leading to a reduced oxygen consumption and to the delivery of oxygen O(2) to symbiosomes. As to expression, root nodules.

The protein resides in the cytoplasm. Its subcellular location is the cytosol. It localises to the nucleus. Its function is as follows. Leghemoglobin that reversibly binds oxygen O(2) through a pentacoordinated heme iron. In root nodules, facilitates the diffusion of oxygen to the bacteroids while preventing the bacterial nitrogenase from being inactivated by buffering dioxygen, nitric oxide and carbon monoxide, and promoting the formation of reactive oxygen species (ROS, e.g. H(2)O(2)). This role is essential for symbiotic nitrogen fixation (SNF). In Pisum sativum (Garden pea), this protein is Leghemoglobin Lb120-1.